A 368-amino-acid polypeptide reads, in one-letter code: 3-dehydroquinate synthase (368 aa).

Residues 109–113, 133–134, Lys-146, Lys-155, and 173–176 each bind NAD(+); these read GVIGD, TS, and TLQT. Glu-188, His-253, and His-270 together coordinate Zn(2+).

This sequence belongs to the sugar phosphate cyclases superfamily. Dehydroquinate synthase family. Co(2+) serves as cofactor. Zn(2+) is required as a cofactor. It depends on NAD(+) as a cofactor.

Its subcellular location is the cytoplasm. The enzyme catalyses 7-phospho-2-dehydro-3-deoxy-D-arabino-heptonate = 3-dehydroquinate + phosphate. It participates in metabolic intermediate biosynthesis; chorismate biosynthesis; chorismate from D-erythrose 4-phosphate and phosphoenolpyruvate: step 2/7. Its function is as follows. Catalyzes the conversion of 3-deoxy-D-arabino-heptulosonate 7-phosphate (DAHP) to dehydroquinate (DHQ). This is 3-dehydroquinate synthase from Synechococcus sp. (strain ATCC 27144 / PCC 6301 / SAUG 1402/1) (Anacystis nidulans).